Reading from the N-terminus, the 323-residue chain is uncharacterized protein (323 aa).

This is an uncharacterized protein from Thermotoga maritima (strain ATCC 43589 / DSM 3109 / JCM 10099 / NBRC 100826 / MSB8).